We begin with the raw amino-acid sequence, 162 residues long: V-type proton ATPase subunit c' (162 aa).

The Lumenal segment spans residues 1-11 (MSSNLCPIYSS). A helical transmembrane segment spans residues 12–32 (FFGFAGVCASMVFSCLGAGYG). At 33 to 54 (TALAGRGIAAVGAFRPEIVMKS) the chain is on the cytoplasmic side. The chain crosses the membrane as a helical span at residues 55-75 (LIPVVMSGIIGVYGLVMSVLI). Over 76–93 (AGDMSPDNDYSLFSGFIH) the chain is Lumenal. A helical transmembrane segment spans residues 94–114 (LSAGLAVGLTGVAAGYAIGVV). The Cytoplasmic portion of the chain corresponds to 115-132 (GDRGVQSFMRQDRIFVSM). Residues 133-153 (VLILIFAEVLGLYGLIVGLIL) traverse the membrane as a helical segment. Over 154-162 (QTKTSNVCY) the chain is Lumenal.

Belongs to the V-ATPase proteolipid subunit family. In terms of assembly, V-ATPase is a heteromultimeric enzyme composed of a peripheral catalytic V1 complex (components A to H) attached to an integral membrane V0 proton pore complex (components: a, c, c', c'', d, e, f and VOA1). The decameric c-ring forms the proton-conducting pore, and is composed of eight proteolipid subunits c, one subunit c' and one subunit c''.

The protein resides in the vacuole membrane. Proton-conducting pore forming subunit of the V0 complex of vacuolar(H+)-ATPase (V-ATPase), a multisubunit enzyme composed of a peripheral complex (V1) that hydrolyzes ATP and a membrane integral complex (V0) that translocates protons. V-ATPase is responsible for acidifying and maintaining the pH of intracellular compartments. In Schizosaccharomyces pombe (strain 972 / ATCC 24843) (Fission yeast), this protein is V-type proton ATPase subunit c'.